The sequence spans 1692 residues: Cullin-7 (1692 aa).

The region spanning 348-421 (RTAFASVNTY…HWHMLEILGF (74 aa)) is the CPH domain. Residues 791–970 (PIQIPFFDVF…HTRLFYMVRA (180 aa)) form the DOC domain. The segment covering 1319–1335 (VAHEDSGKEHKSKKEDA) has biased composition (basic and acidic residues). The tract at residues 1319-1374 (VAHEDSGKEHKSKKEDAAGETAAVAMADEEEEEGKKEEGEEEEGEGEEELEEEEER) is disordered. Residues 1357–1374 (GEEEEGEGEEELEEEEER) show a composition bias toward acidic residues. Lys1570 is covalently cross-linked (Glycyl lysine isopeptide (Lys-Gly) (interchain with G-Cter in NEDD8)).

It belongs to the cullin family. In terms of assembly, component of the 3M complex, composed of core components CUL7, CCDC8 and OBSL1. Component of the Cul7-RING(FBXW8) complex consisting of CUL7, RBX1, SKP1 and FBXW8. Within the Cul7-RING(FBXW8) complex interacts with FBXW8 and RBX1, but not with SKP1. Interacts with CUL1 (via the C-terminal domain); the interaction seems to be mediated by FBXW8; it is likely specific to FBXW8, but not other F-box proteins. Interacts (via the CPH domain) with p53/TP53; the interaction preferentially involves tetrameric and dimeric p53/TP53; this interaction recruits p53/TP53 for ubiquitination by neddylated CUL1-RBX1. The CUL7-CUL9 heterodimer seems to interact specifically with p53/TP53. Interacts with FBXW8; interaction is mutually exclusive of binding to CUL9 or p53/TP53. Interacts with CUL9; leading to inhibited CUL9 activity. Interacts with OBSL1. Interacts (as part of the 3M complex) with HDAC4 and HDAC5; it is negatively regulated by ANKRA2.

Its subcellular location is the cytoplasm. The protein localises to the cytoskeleton. It localises to the microtubule organizing center. It is found in the centrosome. The protein resides in the perinuclear region. Its subcellular location is the golgi apparatus. It functions in the pathway protein modification; protein ubiquitination. Its function is as follows. Core component of the 3M and Cul7-RING(FBXW8) complexes, which mediate the ubiquitination and subsequent proteasomal degradation of target proteins. Core component of the 3M complex, a complex required to regulate microtubule dynamics and genome integrity. It is unclear how the 3M complex regulates microtubules, it could act by controlling the level of a microtubule stabilizer. The Cul7-RING(FBXW8) complex alone lacks ubiquitination activity and does not promote polyubiquitination and proteasomal degradation of p53/TP53. However it mediates recruitment of p53/TP53 for ubiquitination by neddylated CUL1-RBX1. Interaction with CUL9 is required to inhibit CUL9 activity and ubiquitination of BIRC5. The Cul7-RING(FBXW8) complex also mediates ubiquitination and consequent degradation of target proteins such as GORASP1, IRS1 and MAP4K1/HPK1. Ubiquitination of GORASP1 regulates Golgi morphogenesis and dendrite patterning in brain. Mediates ubiquitination and degradation of IRS1 in a mTOR-dependent manner: the Cul7-RING(FBXW8) complex recognizes and binds IRS1 previously phosphorylated by S6 kinase (RPS6KB1 or RPS6KB2). The Cul7-RING(FBXW8) complex also mediates ubiquitination of MAP4K1/HPK1: recognizes and binds autophosphorylated MAP4K1/HPK1, leading to its degradation, thereby affecting cell proliferation and differentiation. Acts as a regulator in trophoblast cell epithelial-mesenchymal transition and placental development. While the Cul7-RING(FBXW8) and the 3M complexes are associated and involved in common processes, CUL7 and the Cul7-RING(FBXW8) complex may have additional functions. Probably plays a role in the degradation of proteins involved in endothelial proliferation and/or differentiation. The polypeptide is Cullin-7 (Cul7) (Rattus norvegicus (Rat)).